We begin with the raw amino-acid sequence, 301 residues long: GTPase Era (301 aa).

The region spanning K4–P173 is the Era-type G domain. The G1 stretch occupies residues G12–S19. GTP is bound at residue G12–S19. Positions N38 to K42 are G2. Residues D64–G67 are G3. Residues D64–L68 and S122–D125 each bind GTP. A G4 region spans residues S122 to D125. The segment at L152 to A154 is G5. A KH type-2 domain is found at L204–K280.

The protein belongs to the TRAFAC class TrmE-Era-EngA-EngB-Septin-like GTPase superfamily. Era GTPase family. As to quaternary structure, monomer.

It is found in the cytoplasm. It localises to the cell inner membrane. Its function is as follows. An essential GTPase that binds both GDP and GTP, with rapid nucleotide exchange. Plays a role in 16S rRNA processing and 30S ribosomal subunit biogenesis and possibly also in cell cycle regulation and energy metabolism. The sequence is that of GTPase Era from Helicobacter pylori (strain Shi470).